The chain runs to 1416 residues: Phospholipid-transporting ATPase VD (1416 aa).

Residues 1 to 97 (MTELLQWARH…PRNLFEQFHR (97 aa)) are Cytoplasmic-facing. Residues 98 to 118 (AANLYFLFLVVLNWVPLVEAF) form a helical membrane-spanning segment. At 119–120 (QK) the chain is on the exoplasmic loop side. The helical transmembrane segment at 121–141 (EITMLPLVVVLTIIAIKDGLE) threads the bilayer. Over 142 to 321 (DYRKYKIDKQ…SKLERRANTD (180 aa)) the chain is Cytoplasmic. A helical membrane pass occupies residues 322–342 (VLWCVLLLIVMCLTGALGHGI). Over 343–365 (WLSRYENMLFFNIPEPDGRVISP) the chain is Exoplasmic loop. Residues 366–386 (VLTGFYVFWTMIILLQVLIPI) form a helical membrane-spanning segment. Residues 387–1110 (SLYVSIEIVK…HWCYTRLSNM (724 aa)) lie on the Cytoplasmic side of the membrane. Residue Asp438 is the 4-aspartylphosphate intermediate of the active site. Positions 438, 439, and 440 each coordinate ATP. Asp438 is a binding site for Mg(2+). Position 440 (Thr440) interacts with Mg(2+). The disordered stretch occupies residues 498 to 544 (AQGCRTVPSGPLGKPSAQLSGSTSAVGNGEGSGEVPHSRQAAFSSPM). A compositionally biased stretch (polar residues) spans 514–523 (AQLSGSTSAV). ATP-binding residues include Glu729, Phe771, Lys795, Arg838, Thr918, Gly919, and Asp920. The interval 971 to 990 (PELASSRKNFPQPSDAQGQG) is disordered. Over residues 976–987 (SRKNFPQPSDAQ) the composition is skewed to polar residues. ATP is bound by residues 993–1000 (GLVITGKT), Arg1027, and Lys1033. Asp1053 is a binding site for Mg(2+). Asn1056 and Asp1057 together coordinate ATP. Asp1057 provides a ligand contact to Mg(2+). A helical membrane pass occupies residues 1111–1131 (ILYFFYKNVAYVNLLFWYQFF). The Exoplasmic loop portion of the chain corresponds to 1132–1142 (CGFSGTSMTDY). The helical transmembrane segment at 1143–1163 (WVLIFFNLLFTSVPPIIYGVL) threads the bilayer. Topologically, residues 1164-1192 (EKDVSAETLLQLPELYRSGQRSEEYLPLT) are cytoplasmic. A helical transmembrane segment spans residues 1193–1213 (FWITLLDAFYQSLVCFFVPYF). The Exoplasmic loop portion of the chain corresponds to 1214-1221 (TYQGSDID). Residues 1222 to 1242 (IFTFGNPLNTAALFIILLHLV) traverse the membrane as a helical segment. Over 1243–1252 (IESKSLTWIH) the chain is Cytoplasmic. The helical transmembrane segment at 1253-1273 (MLVTVGSILSYFFFALAFGAL) threads the bilayer. Residues 1274 to 1289 (CVTCNPPSNPYGIMRK) lie on the Exoplasmic loop side of the membrane. A helical membrane pass occupies residues 1290 to 1310 (HMLDPVFYLVCVLTTFVALLP). Over 1311-1416 (RFLYRVLQGS…ASKMTGSSAS (106 aa)) the chain is Cytoplasmic. The segment at 1358 to 1416 (SKHASQSAAMSGRPTPGSSAVLAMKSATVSTVEQSTRETALDRGCSEPGASKMTGSSAS) is disordered. Residue 1361–1368 (ASQSAAMS) coordinates ATP. Basic and acidic residues predominate over residues 1392–1402 (STRETALDRGC).

This sequence belongs to the cation transport ATPase (P-type) (TC 3.A.3) family. Type IV subfamily. In terms of assembly, component of a P4-ATPase flippase complex which consists of a catalytic alpha subunit ATP10A and an accessory beta subunit TMEM30A. Mg(2+) serves as cofactor. Post-translationally, autophosphorylated at the conserved aspartate of the P-type ATPase signature sequence. As to expression, expressed at low amounts in liver, brain, testes, and kidney (at protein level). Expressed in placenta.

Its subcellular location is the cell membrane. It is found in the endoplasmic reticulum membrane. It catalyses the reaction ATP + H2O + phospholipidSide 1 = ADP + phosphate + phospholipidSide 2.. It carries out the reaction a beta-D-glucosyl-(1&lt;-&gt;1')-N-acylsphing-4-enine(out) + ATP + H2O = a beta-D-glucosyl-(1&lt;-&gt;1')-N-acylsphing-4-enine(in) + ADP + phosphate + H(+). In terms of biological role, catalytic component of a P4-ATPase flippase complex, which catalyzes the hydrolysis of ATP coupled to the transport of glucosylceramide (GlcCer) from the outer to the inner leaflet of the plasma membrane. The protein is Phospholipid-transporting ATPase VD (Atp10d) of Mus musculus (Mouse).